We begin with the raw amino-acid sequence, 933 residues long: Phosphoenolpyruvate carboxylase (933 aa).

Catalysis depends on residues His158 and Lys592.

It belongs to the PEPCase type 1 family. The cofactor is Mg(2+).

The enzyme catalyses oxaloacetate + phosphate = phosphoenolpyruvate + hydrogencarbonate. In terms of biological role, forms oxaloacetate, a four-carbon dicarboxylic acid source for the tricarboxylic acid cycle. This Nitrosomonas eutropha (strain DSM 101675 / C91 / Nm57) protein is Phosphoenolpyruvate carboxylase.